A 321-amino-acid chain; its full sequence is Nacrein-like protein (321 aa).

The region spanning 1–319 (RGPKNWCKVH…NKNVIVYRNH (319 aa)) is the Alpha-carbonic anhydrase domain. Catalysis depends on His-58, which acts as the Proton acceptor.

This sequence belongs to the alpha-carbonic anhydrase family. Component of the organic matrix of calcified shell layers like nacre and prisms.

It is found in the secreted. The sequence is that of Nacrein-like protein from Mytilus californianus (California mussel).